A 905-amino-acid polypeptide reads, in one-letter code: Respiratory burst oxidase homolog protein B (905 aa).

Disordered regions lie at residues 1–46 and 69–134; these read MADL…KTAR and EVRG…VRKR. The Cytoplasmic portion of the chain corresponds to 1–355; sequence MADLEAGMVA…MYFLEENWKR (355 aa). Over residues 29-44 the composition is skewed to polar residues; the sequence is IPNSGNLGSSNRSTKT. Residues 75–84 show a composition bias toward gly residues; it reads EGGSGHGTGF. The segment covering 91-108 has biased composition (polar residues); the sequence is SPSSKSGKLTSKLRQVTN. 2 EF-hand-like regions span residues 172 to 180 and 206 to 217; these read QVDGVLLRS and RGIVKQVLTKDE. 2 EF-hand domains span residues 229–264 and 273–308; these read GFDN…SASA and RADE…SPSE. Residues Asp-242, Asn-244, Asp-246, Arg-248, and Glu-253 each coordinate Ca(2+). The helical transmembrane segment at 356–376 threads the bilayer; that stretch reads SWVMTLWISICIALFIWKFIQ. Over 377 to 440 the chain is Extracellular; that stretch reads YRNRAVFGIM…FNDNINFHKV (64 aa). In terms of domain architecture, Ferric oxidoreductase spans 395 to 551; the sequence is GAAETLKFNM…HLFVIVYTLL (157 aa). Residues 441 to 461 form a helical membrane-spanning segment; sequence IAAGVAVGVALHAGAHLTCDF. Residues 462 to 496 are Cytoplasmic-facing; that stretch reads PRLLHASDAQYELMKPFFGEKRPPNYWWFVKGTEG. Residues 497–517 traverse the membrane as a helical segment; it reads WTGVVMVVLMAIAFTLAQPWF. At 518 to 539 the chain is on the extracellular side; the sequence is RRNKLKDSNPLKKMTGFNAFWF. The helical transmembrane segment at 540–560 threads the bilayer; that stretch reads THHLFVIVYTLLFVHGTCLYL. The Cytoplasmic portion of the chain corresponds to 561 to 568; the sequence is SRKWYKKT. The chain crosses the membrane as a helical span at residues 569–586; sequence TWMYLAVPVVLYVSERIL. The FAD-binding FR-type domain occupies 587 to 715; the sequence is RLFRSHDAVG…DGPYGAPAQD (129 aa). Residues 587–717 lie on the Extracellular side of the membrane; the sequence is RLFRSHDAVG…PYGAPAQDYR (131 aa). Residues 718-738 form a helical membrane-spanning segment; that stretch reads EYDVLLLIGLGIGATPLISIV. The Cytoplasmic portion of the chain corresponds to 739–905; the sequence is KDVLNHIQGE…TRFDFHKENF (167 aa).

It belongs to the RBOH (TC 5.B.1.3) family. Monomer and homodimer, stabilized by swapping the EF-hand motifs. Interacts with GTP-bound RAC1.

The protein resides in the membrane. Functionally, calcium-dependent NADPH oxidase that generates superoxide. This Oryza sativa subsp. japonica (Rice) protein is Respiratory burst oxidase homolog protein B (RBOHB).